Consider the following 200-residue polypeptide: LexA repressor (200 aa).

The segment at residues 28–48 is a DNA-binding region (H-T-H motif); that stretch reads RAEIARILGFKSANAAEEHIK. Catalysis depends on for autocatalytic cleavage activity residues serine 118 and lysine 155.

This sequence belongs to the peptidase S24 family. As to quaternary structure, homodimer.

It carries out the reaction Hydrolysis of Ala-|-Gly bond in repressor LexA.. Its function is as follows. Represses a number of genes involved in the response to DNA damage (SOS response), including recA and lexA. In the presence of single-stranded DNA, RecA interacts with LexA causing an autocatalytic cleavage which disrupts the DNA-binding part of LexA, leading to derepression of the SOS regulon and eventually DNA repair. The chain is LexA repressor from Cellvibrio japonicus (strain Ueda107) (Pseudomonas fluorescens subsp. cellulosa).